Consider the following 278-residue polypeptide: uncharacterized protein (278 aa).

Residues 112-113, 191-193, and D217 contribute to the NAD(+) site; these read HI and VGR. R193 is a catalytic residue. The active site involves E222. Residue H241 is the Proton donor of the active site. Residue 241–244 coordinates NAD(+); the sequence is HSAG.

It belongs to the D-isomer specific 2-hydroxyacid dehydrogenase family.

This is an uncharacterized protein from Streptomyces coelicolor.